A 175-amino-acid polypeptide reads, in one-letter code: Nucleoplasmin-3 (175 aa).

Ala2 carries the N-acetylalanine modification. Ser16 carries the post-translational modification Phosphoserine. An Omega-N-methylarginine modification is found at Arg27. Residues Ser147 and Ser151 each carry the phosphoserine modification.

Belongs to the nucleoplasmin family. In terms of assembly, interacts with NPM (via N-terminus). Forms a pentamer with NPM at a ratio 4:1 (NPM3/NPM). Two pentamers form a decamer. Phosphorylated. As to expression, predominantly expressed in testis.

The protein resides in the nucleus. It is found in the nucleolus. In terms of biological role, plays a role in the regulation of diverse cellular processes such as ribosome biogenesis, chromatin remodeling or protein chaperoning. Modulates the histone chaperone function and the RNA-binding activity of nucleolar phosphoprotein B23/NPM. Efficiently mediates chromatin remodeling when included in a pentamer containing NPM3 and NPM. The polypeptide is Nucleoplasmin-3 (Npm3) (Mus musculus (Mouse)).